The sequence spans 176 residues: MRDRRASYEYEDLLACGRGELFGPGNAQLPLPPMLMFDRIAEISETGGEHGKGLIRAELEVKPDLWFFGCHFKGDPVMPGCLGLDAMWQLVGFFLGWSGGIGPGRALGLGELKFSGQVQPNIKKVVYTIDIKRVMRSKLWLGIADGTLAADGEIFYRAKDLKVGLFKQTAAAQPAE.

Histidine 71 is a catalytic residue.

This sequence belongs to the thioester dehydratase family. FabA subfamily. As to quaternary structure, homodimer.

Its subcellular location is the cytoplasm. The enzyme catalyses a (3R)-hydroxyacyl-[ACP] = a (2E)-enoyl-[ACP] + H2O. The catalysed reaction is (3R)-hydroxydecanoyl-[ACP] = (2E)-decenoyl-[ACP] + H2O. It carries out the reaction (2E)-decenoyl-[ACP] = (3Z)-decenoyl-[ACP]. The protein operates within lipid metabolism; fatty acid biosynthesis. Functionally, necessary for the introduction of cis unsaturation into fatty acids. Catalyzes the dehydration of (3R)-3-hydroxydecanoyl-ACP to E-(2)-decenoyl-ACP and then its isomerization to Z-(3)-decenoyl-ACP. Can catalyze the dehydratase reaction for beta-hydroxyacyl-ACPs with saturated chain lengths up to 16:0, being most active on intermediate chain length. This chain is 3-hydroxydecanoyl-[acyl-carrier-protein] dehydratase, found in Rhodopseudomonas palustris (strain BisB18).